A 635-amino-acid chain; its full sequence is Cationic amino acid transporter 4 (635 aa).

The next 3 membrane-spanning stretches (helical) occupy residues 42-62 (LTLL…TGAV), 66-86 (VAGP…LLAA), and 113-133 (LWAF…GAAV). N-linked (GlcNAc...) asparagine glycosylation is found at asparagine 151 and asparagine 195. The helical transmembrane segment at 197–217 (TFSAISLLVILFIVILGFILA) threads the bilayer. Asparagine 221 carries N-linked (GlcNAc...) asparagine glycosylation. A run of 5 helical transmembrane segments spans residues 229–249 (FAPF…YAFV), 270–290 (LAIA…STVL), 318–338 (GFIV…SLLF), 365–385 (QVPV…ALLL), and 391–411 (VQFL…SIIV). Phosphoserine occurs at positions 422 and 427. Residues 478–498 (VTWALGVMLASAITIGCVLVF) traverse the membrane as a helical segment. A glycan (N-linked (GlcNAc...) asparagine) is linked at asparagine 500. 3 helical membrane-spanning segments follow: residues 508–528 (WGYI…LLVL), 539–559 (LFQI…NICL), and 567–587 (TWVR…GYGI). A glycan (N-linked (GlcNAc...) asparagine) is linked at asparagine 601.

The protein belongs to the amino acid-polyamine-organocation (APC) superfamily. Cationic amino acid transporter (CAT) (TC 2.A.3.3) family.

It is found in the membrane. In terms of biological role, involved in the transport of the cationic amino acids (arginine, lysine and ornithine). The sequence is that of Cationic amino acid transporter 4 (SLC7A4) from Homo sapiens (Human).